We begin with the raw amino-acid sequence, 344 residues long: Protein L-Myc-1-A (344 aa).

Disordered stretches follow at residues 100–162 and 209–261; these read RLTT…DDEI and PPEP…EDIV. 3 stretches are compositionally biased toward polar residues: residues 102-112, 123-133, and 236-255; these read TTASPRATNPQ, PGVNSIEQNAN, and PALQ…SGSS. The bHLH domain maps to 261 to 313; that stretch reads VKKKNHNYLERKRRNDLRSRFLALREEVPSLTRSTKTPKVVVLSKATEFLKGL. Residues 313–341 form a leucine-zipper region; the sequence is LVIQEQQLTAEKFKLWSRHQQLLRRISHL.

In terms of assembly, efficient DNA binding requires dimerization with another bHLH protein. Binds DNA as a heterodimer with MAX. High levels in oocytes, modest levels in kidney and low levels in spleen.

Its subcellular location is the nucleus. This is Protein L-Myc-1-A (mycl1-a) from Xenopus laevis (African clawed frog).